The following is a 346-amino-acid chain: Nitrilase 1 (346 aa).

The residue at position 2 (S2) is an N-acetylserine. A CN hydrolase domain is found at V25–L297. The active-site Proton acceptor is the E65. K152 acts as the Proton donor in catalysis. Residue C186 is the Nucleophile of the active site.

This sequence belongs to the carbon-nitrogen hydrolase superfamily. Nitrilase family. Interacts with DEK3. Expressed in cotyledons, hypocotyls, leaves, roots, stems, flowers and siliques.

The catalysed reaction is a nitrile + 2 H2O = a carboxylate + NH4(+). Can convert indole-3-acetonitrile to the plant hormone indole-3-acetic acid. This Arabidopsis thaliana (Mouse-ear cress) protein is Nitrilase 1.